The chain runs to 331 residues: Cysteine and histidine-rich domain-containing protein 1 (331 aa).

Residues C5, C10, C24, H27, C42, C43, C59, H64, C157, C162, C176, H179, C194, C195, C211, and H216 each contribute to the Zn(2+) site. 2 CHORD domains span residues 5–64 (CYNR…KGLH) and 157–216 (CKNA…TGTH). In terms of domain architecture, CS spans 227-316 (VVPCRHDWHQ…AEPLLWASLE (90 aa)).

In terms of biological role, regulates centrosome duplication. The polypeptide is Cysteine and histidine-rich domain-containing protein 1 (CHORDC1) (Gallus gallus (Chicken)).